We begin with the raw amino-acid sequence, 588 residues long: Secreted triacylglycerol lipase LIP1 (588 aa).

Positions 1–20 (MRFSGFVSGLGLGLLTAVSA) are cleaved as a signal peptide. Catalysis depends on serine 258, which acts as the Acyl-ester intermediate. Asparagine 400 is a glycosylation site (N-linked (GlcNAc...) asparagine).

It belongs to the type-B carboxylesterase/lipase family.

The protein resides in the secreted. The catalysed reaction is a triacylglycerol + H2O = a diacylglycerol + a fatty acid + H(+). Functionally, secreted acylglycerol lipase required for efficient utilization of saturated triglyceride lipids. Is not involved in virulence. The chain is Secreted triacylglycerol lipase LIP1 from Gibberella zeae (strain ATCC MYA-4620 / CBS 123657 / FGSC 9075 / NRRL 31084 / PH-1) (Wheat head blight fungus).